Reading from the N-terminus, the 335-residue chain is Acetyl-coenzyme A carboxylase carboxyl transferase subunit alpha (335 aa).

One can recognise a CoA carboxyltransferase C-terminal domain in the interval 48–308 (TLEKKVDALR…KGMLIEELKA (261 aa)).

Belongs to the AccA family. As to quaternary structure, acetyl-CoA carboxylase is a heterohexamer composed of biotin carboxyl carrier protein (AccB), biotin carboxylase (AccC) and two subunits each of ACCase subunit alpha (AccA) and ACCase subunit beta (AccD).

The protein resides in the cytoplasm. It carries out the reaction N(6)-carboxybiotinyl-L-lysyl-[protein] + acetyl-CoA = N(6)-biotinyl-L-lysyl-[protein] + malonyl-CoA. It participates in lipid metabolism; malonyl-CoA biosynthesis; malonyl-CoA from acetyl-CoA: step 1/1. Component of the acetyl coenzyme A carboxylase (ACC) complex. First, biotin carboxylase catalyzes the carboxylation of biotin on its carrier protein (BCCP) and then the CO(2) group is transferred by the carboxyltransferase to acetyl-CoA to form malonyl-CoA. This Chlorobium luteolum (strain DSM 273 / BCRC 81028 / 2530) (Pelodictyon luteolum) protein is Acetyl-coenzyme A carboxylase carboxyl transferase subunit alpha.